The sequence spans 529 residues: ATP synthase F(1) complex subunit beta, mitochondrial (529 aa).

Residues 1–47 constitute a mitochondrion transit peptide; sequence MLGFVGRVAAAPASGALRRLTPSASLPPAQLLLRAAPTAVHPVRDYA. An O-linked (GlcNAc) serine glycan is attached at serine 106. An N6-acetyllysine; alternate mark is found at lysine 124, lysine 133, and lysine 161. Residues lysine 124, lysine 133, and lysine 161 each carry the N6-succinyllysine; alternate modification. Lysine 198 carries the N6-acetyllysine modification. ADP contacts are provided by glycine 209, valine 210, glycine 211, lysine 212, threonine 213, and valine 214. Glycine 209 is a binding site for ATP. Phosphate is bound by residues glycine 209, valine 210, glycine 211, lysine 212, and threonine 213. Glycine 211, lysine 212, threonine 213, and valine 214 together coordinate ATP. Residue threonine 213 coordinates Mg(2+). Glutamate 238 contacts Mg(2+). An ATP-binding site is contributed by arginine 239. An N6-acetyllysine; alternate mark is found at lysine 259 and lysine 264. An N6-succinyllysine; alternate mark is found at lysine 259 and lysine 264. Threonine 312 is subject to Phosphothreonine. The residue at position 415 (serine 415) is a Phosphoserine. Lysine 426 bears the N6-acetyllysine mark. Phosphoserine is present on serine 433. Residues lysine 480 and lysine 485 each carry the N6-acetyllysine modification. Lysine 522 is subject to N6-acetyllysine; alternate. An N6-succinyllysine; alternate modification is found at lysine 522. A Phosphoserine modification is found at serine 529.

Belongs to the ATPase alpha/beta chains family. As to quaternary structure, homotrimer. Component of the ATP synthase complex composed at least of ATP5F1A/subunit alpha, ATP5F1B/subunit beta, ATP5MC1/subunit c (homooctomer), MT-ATP6/subunit a, MT-ATP8/subunit 8, ATP5ME/subunit e, ATP5MF/subunit f, ATP5MG/subunit g, ATP5MK/subunit k, ATP5MJ/subunit j, ATP5F1C/subunit gamma, ATP5F1D/subunit delta, ATP5F1E/subunit epsilon, ATP5PF/subunit F6, ATP5PB/subunit b, ATP5PD/subunit d, ATP5PO/subunit OSCP. ATP synthase complex consists of a soluble F(1) head domain (subunits alpha(3) and beta(3)) - the catalytic core - and a membrane F(0) domain - the membrane proton channel (subunits c, a, 8, e, f, g, k and j). These two domains are linked by a central stalk (subunits gamma, delta, and epsilon) rotating inside the F1 region and a stationary peripheral stalk (subunits F6, b, d, and OSCP). Interacts with PPIF. Interacts with BCL2L1 isoform BCL-X(L); the interaction mediates the association of BCL2L1 isoform BCL-X(L) with the mitochondrial membrane F(1)F(0) ATP synthase and enhances neurons metabolic efficiency. Interacts with CLN5 and PPT1. Interacts with S100A1; this interaction increases F1-ATPase activity. Interacts with MTLN. Interacts with TTC5/STRAP; the interaction results in decreased mitochondrial ATP production. The cofactor is Mg(2+).

The protein resides in the mitochondrion inner membrane. The catalysed reaction is ATP + H2O + 4 H(+)(in) = ADP + phosphate + 5 H(+)(out). In terms of biological role, catalytic subunit beta, of the mitochondrial membrane ATP synthase complex (F(1)F(0) ATP synthase or Complex V) that produces ATP from ADP in the presence of a proton gradient across the membrane which is generated by electron transport complexes of the respiratory chain. ATP synthase complex consist of a soluble F(1) head domain - the catalytic core - and a membrane F(1) domain - the membrane proton channel. These two domains are linked by a central stalk rotating inside the F(1) region and a stationary peripheral stalk. During catalysis, ATP synthesis in the catalytic domain of F(1) is coupled via a rotary mechanism of the central stalk subunits to proton translocation. In vivo, can only synthesize ATP although its ATP hydrolase activity can be activated artificially in vitro. With the subunit alpha (ATP5F1A), forms the catalytic core in the F(1) domain. The polypeptide is ATP synthase F(1) complex subunit beta, mitochondrial (Homo sapiens (Human)).